Consider the following 405-residue polypeptide: Tyrosine--tRNA ligase (405 aa).

The 'HIGH' region signature appears at 46 to 55 (PTRPDIHLGH). The 'KMSKS' region motif lies at 230-234 (KMSKS). Lysine 233 is a binding site for ATP. In terms of domain architecture, S4 RNA-binding spans 341–404 (MGLAALMVKA…GKKKFVKIVV (64 aa)).

It belongs to the class-I aminoacyl-tRNA synthetase family. TyrS type 2 subfamily. In terms of assembly, homodimer.

The protein resides in the cytoplasm. It catalyses the reaction tRNA(Tyr) + L-tyrosine + ATP = L-tyrosyl-tRNA(Tyr) + AMP + diphosphate + H(+). Its function is as follows. Catalyzes the attachment of tyrosine to tRNA(Tyr) in a two-step reaction: tyrosine is first activated by ATP to form Tyr-AMP and then transferred to the acceptor end of tRNA(Tyr). This is Tyrosine--tRNA ligase from Bdellovibrio bacteriovorus (strain ATCC 15356 / DSM 50701 / NCIMB 9529 / HD100).